A 215-amino-acid polypeptide reads, in one-letter code: Probable transaldolase (215 aa).

Lysine 83 (schiff-base intermediate with substrate) is an active-site residue.

It belongs to the transaldolase family. Type 3B subfamily.

It is found in the cytoplasm. It catalyses the reaction D-sedoheptulose 7-phosphate + D-glyceraldehyde 3-phosphate = D-erythrose 4-phosphate + beta-D-fructose 6-phosphate. It participates in carbohydrate degradation; pentose phosphate pathway; D-glyceraldehyde 3-phosphate and beta-D-fructose 6-phosphate from D-ribose 5-phosphate and D-xylulose 5-phosphate (non-oxidative stage): step 2/3. In terms of biological role, transaldolase is important for the balance of metabolites in the pentose-phosphate pathway. The chain is Probable transaldolase from Methanococcus maripaludis (strain C5 / ATCC BAA-1333).